Reading from the N-terminus, the 415-residue chain is Fructose-like permease IIC component (415 aa).

Residues 1 to 46 (MAIKKRSATVVPGASGAAAAVKNPQASKSSFWGELPQHVMSGISRM) lie on the Cytoplasmic side of the membrane. In terms of domain architecture, PTS EIIC type-2 spans 35–410 (LPQHVMSGIS…RLMMFRKGKL (376 aa)). The helical transmembrane segment at 47-67 (VPTLIMGGVILAFSQLIAYSW) threads the bilayer. The Periplasmic segment spans residues 68-101 (LKIPAEIGIMDALNSGKFSGFDLSLLKFAWLSQS). The helical transmembrane segment at 102–122 (FGGVLFGFAIPMFAAFVANSI) threads the bilayer. Over 123–126 (GGKL) the chain is Cytoplasmic. Residues 127-147 (AFPAGFIGGLMSTQPTQLLNF) traverse the membrane as a helical segment. Over 148-157 (DPSTMQWATS) the chain is Periplasmic. Residues 158 to 178 (SPVPSTFIGALIISIVAGYLV) form a helical membrane-spanning segment. Topologically, residues 179–197 (KWMNQKIQLPDFLLAFKTT) are cytoplasmic. A helical transmembrane segment spans residues 198 to 218 (FLLPILSAIFVMLAMYYVITP). Topologically, residues 219–237 (FGGWINGGIRTVLTAAGEK) are periplasmic. The helical transmembrane segment at 238–258 (GALMYAMGIAAATAIDLGGPI) threads the bilayer. Residues 259–276 (NKAAGFVAFSFTTDHVLP) are Cytoplasmic-facing. A helical membrane pass occupies residues 277–297 (VTARSIAIVIPPIGLGLATII). The Periplasmic segment spans residues 298-318 (DRRLTGKRLFNAQLYPQGKTA). Residues 319–339 (MFLAFMGISEGAIPFALESPI) traverse the membrane as a helical segment. The Cytoplasmic segment spans residues 340–341 (TA). The helical transmembrane segment at 342–362 (IPSYMVGAIVGSTAAVWLGAV) threads the bilayer. The Periplasmic portion of the chain corresponds to 363–378 (QWFPESAIWAWPLVTN). Residues 379 to 399 (LGVYMAGIALGAVITALMVVF) traverse the membrane as a helical segment. The Cytoplasmic portion of the chain corresponds to 400-415 (LRLMMFRKGKLLIDSL).

The protein localises to the cell inner membrane. Functionally, the phosphoenolpyruvate-dependent sugar phosphotransferase system (PTS), a major carbohydrate active -transport system, catalyzes the phosphorylation of incoming sugar substrates concomitant with their translocation across the cell membrane. This Escherichia coli O157:H7 protein is Fructose-like permease IIC component (fryC).